The sequence spans 154 residues: CASP-like protein ARALYDRAFT_485429 (154 aa).

The Cytoplasmic portion of the chain corresponds to 1 to 12 (MENVPGSFGTSA). The helical transmembrane segment at 13–33 (SFALRFGQTIFSAASLIFMCF) threads the bilayer. Over 34–41 (DYDFYDFT) the chain is Extracellular. A helical membrane pass occupies residues 42–62 (TFCYLATVMAIVTPWSILLAL). The Cytoplasmic segment spans residues 63 to 81 (TDTYSVLVKLLPQELRVLS). A helical transmembrane segment spans residues 82 to 102 (IVFAGDFVLSFLSLGGACAVA). Over 103–128 (SATELLASADGKICDGNLCIQYQVSA) the chain is Extracellular. The helical transmembrane segment at 129–149 (ALAFLCWFLLLASALFNFWSL) threads the bilayer. Residues 150–154 (PSLYY) are Cytoplasmic-facing.

This sequence belongs to the Casparian strip membrane proteins (CASP) family. As to quaternary structure, homodimer and heterodimers.

The protein localises to the cell membrane. The sequence is that of CASP-like protein ARALYDRAFT_485429 from Arabidopsis lyrata subsp. lyrata (Lyre-leaved rock-cress).